The chain runs to 1227 residues: Protein U7 (1227 aa).

The protein belongs to the herpesviridae US22 family.

The chain is Protein U7 (U7/U5) from Homo sapiens (Human).